The primary structure comprises 236 residues: Large ribosomal subunit protein uL3 (236 aa).

Disordered stretches follow at residues Ser132 to Gln153 and Lys200 to Gly236. Over residues Asn133–Val145 the composition is skewed to polar residues. Gln153 carries the N5-methylglutamine modification. A compositionally biased stretch (polar residues) spans Val206 to Thr216. The segment covering Asn217–Gly228 has biased composition (low complexity).

This sequence belongs to the universal ribosomal protein uL3 family. As to quaternary structure, part of the 50S ribosomal subunit. Forms a cluster with proteins L14 and L19. Post-translationally, methylated by PrmB.

Its function is as follows. One of the primary rRNA binding proteins, it binds directly near the 3'-end of the 23S rRNA, where it nucleates assembly of the 50S subunit. This Nitrosospira multiformis (strain ATCC 25196 / NCIMB 11849 / C 71) protein is Large ribosomal subunit protein uL3.